Here is a 436-residue protein sequence, read N- to C-terminus: Glutamate-1-semialdehyde 2,1-aminomutase 2 (436 aa).

At Lys271 the chain carries N6-(pyridoxal phosphate)lysine.

Belongs to the class-III pyridoxal-phosphate-dependent aminotransferase family. HemL subfamily. In terms of assembly, homodimer. It depends on pyridoxal 5'-phosphate as a cofactor.

The protein resides in the cytoplasm. It carries out the reaction (S)-4-amino-5-oxopentanoate = 5-aminolevulinate. Its pathway is porphyrin-containing compound metabolism; protoporphyrin-IX biosynthesis; 5-aminolevulinate from L-glutamyl-tRNA(Glu): step 2/2. This chain is Glutamate-1-semialdehyde 2,1-aminomutase 2, found in Exiguobacterium sibiricum (strain DSM 17290 / CCUG 55495 / CIP 109462 / JCM 13490 / 255-15).